Consider the following 803-residue polypeptide: Phenylalanine--tRNA ligase beta subunit (803 aa).

The region spanning 40-153 (ASLDRRIVVG…SSWEIGKPFA (114 aa)) is the tRNA-binding domain. The B5 domain occupies 400–476 (ADLQLLALRP…RLYGYNAIES (77 aa)). Mg(2+) is bound by residues D454, D460, E463, and E464. Residues 709–801 (SRFPVVERDI…AESKLGAVIR (93 aa)) enclose the FDX-ACB domain.

This sequence belongs to the phenylalanyl-tRNA synthetase beta subunit family. Type 1 subfamily. As to quaternary structure, tetramer of two alpha and two beta subunits. It depends on Mg(2+) as a cofactor.

The protein localises to the cytoplasm. It carries out the reaction tRNA(Phe) + L-phenylalanine + ATP = L-phenylalanyl-tRNA(Phe) + AMP + diphosphate + H(+). This chain is Phenylalanine--tRNA ligase beta subunit, found in Chlorobium chlorochromatii (strain CaD3).